Consider the following 569-residue polypeptide: Aspartate--tRNA ligase, cytoplasmic 2 (569 aa).

The tract at residues 1-23 (MSEENNHKEKSKNEIKKEKKKIE) is disordered. Positions 292-295 (QFYR) are aspartate. Arg-314 contributes to the L-aspartate binding site. Residues 314-316 (RTD) and 322-324 (RHL) contribute to the ATP site. 2 residues coordinate L-aspartate: Ser-475 and Arg-479. 540–543 (GLER) contacts ATP.

It belongs to the class-II aminoacyl-tRNA synthetase family. Type 2 subfamily.

Its subcellular location is the cytoplasm. The enzyme catalyses tRNA(Asp) + L-aspartate + ATP = L-aspartyl-tRNA(Asp) + AMP + diphosphate. The protein is Aspartate--tRNA ligase, cytoplasmic 2 (aspS2) of Dictyostelium discoideum (Social amoeba).